Consider the following 305-residue polypeptide: Thioredoxin reductase (305 aa).

Residue 28-35 (LGIETSSQ) participates in FAD binding. The cysteines at positions 129 and 132 are disulfide-linked. An FAD-binding site is contributed by 272 to 281 (DCCDWIYRQA).

This sequence belongs to the class-II pyridine nucleotide-disulfide oxidoreductase family. In terms of assembly, homodimer. FAD serves as cofactor.

The protein localises to the cytoplasm. The enzyme catalyses [thioredoxin]-dithiol + NADP(+) = [thioredoxin]-disulfide + NADPH + H(+). The chain is Thioredoxin reductase (TRXB) from Spironucleus barkhanus.